A 345-amino-acid polypeptide reads, in one-letter code: Methionine import ATP-binding protein MetN (345 aa).

The 240-residue stretch at 2–241 folds into the ABC transporter domain; the sequence is IKLKNISKIF…PKTELAQEFI (240 aa). Residue 38–45 participates in ATP binding; sequence GASGAGKS.

This sequence belongs to the ABC transporter superfamily. Methionine importer (TC 3.A.1.24) family. The complex is composed of two ATP-binding proteins (MetN), two transmembrane proteins (MetI) and a solute-binding protein (MetQ).

It localises to the cell inner membrane. The enzyme catalyses L-methionine(out) + ATP + H2O = L-methionine(in) + ADP + phosphate + H(+). It carries out the reaction D-methionine(out) + ATP + H2O = D-methionine(in) + ADP + phosphate + H(+). Part of the ABC transporter complex MetNIQ involved in methionine import. Responsible for energy coupling to the transport system. The protein is Methionine import ATP-binding protein MetN of Mannheimia succiniciproducens (strain KCTC 0769BP / MBEL55E).